We begin with the raw amino-acid sequence, 757 residues long: Tyrosine-protein kinase HTK16 (757 aa).

The SH2 1 domain occupies 10–102 (WYHGKITREV…GLPCKLVDFC (93 aa)). ANK repeat units lie at residues 115–147 (GLDT…NVNA), 151–180 (SGLT…DASA), 184–214 (NGRT…DFLK), 219–248 (NGWV…SMYP), and 252–281 (DGDT…NQPK). Residues 287–379 (WLHQNLDRNG…GLPTLLQFPV (93 aa)) enclose the SH2 2 domain. 2 disordered regions span residues 381-407 (SAEN…PSRP) and 444-467 (PKLP…QKGD). The span at 455–467 (EVPNSVNVGQKGD) shows a compositional bias: polar residues. Residues 484–740 (ISFGKELGVG…PTFNELHSTF (257 aa)) form the Protein kinase domain. Residues 490–498 (LGVGEFGSV) and K516 contribute to the ATP site. The active-site Proton acceptor is the D608. Y746 is subject to Phosphotyrosine.

Belongs to the protein kinase superfamily. Tyr protein kinase family. In terms of tissue distribution, epithelial cells.

The catalysed reaction is L-tyrosyl-[protein] + ATP = O-phospho-L-tyrosyl-[protein] + ADP + H(+). May be involved in signal transduction. The sequence is that of Tyrosine-protein kinase HTK16 (HTK16) from Hydra vulgaris (Hydra).